Reading from the N-terminus, the 341-residue chain is Peroxisomal membrane protein import receptor PEX19 (341 aa).

Positions 1-18 are enriched in acidic residues; the sequence is MNENEYDNFDDLDDLLDE. 5 disordered regions span residues 1–26, 39–66, 109–141, 293–312, and 318–341; these read MNEN…LDEQ, DSEN…EDPE, VPRQ…FKNI, LGDS…NEEE, and LEID…CKQQ. Residues 39–53 show a composition bias toward basic and acidic residues; sequence DSENKEKNAESKDSD. A Phosphoserine modification is found at Ser-61. A compositionally biased stretch (polar residues) spans 113 to 141; the sequence is QMEQGSSSLKSNSTDKGTLNGSNPGFKNI. Position 303 is a phosphoserine (Ser-303). Residues 330 to 341 are compositionally biased toward basic and acidic residues; the sequence is LDKELTDGCKQQ. Cysteine methyl ester is present on Cys-338. Cys-338 is lipidated: S-farnesyl cysteine. Positions 339-341 are cleaved as a propeptide — removed in mature form; the sequence is KQQ.

Belongs to the peroxin-19 family. As to quaternary structure, interacts (farnesylated) with PEX3; farnesylation is required for this interaction. Interacts with PEX2, PEX5, PEX10, PEX11, PEX12, PEX13, PEX14, PEX17, PEX22, PEX25, PEX30 and PEX32; the interaction requires well-defined PEX19-binding sites within the peroxisomal membrane protein targeting signal (mPTS) of the PMPs and is independent on the presence of PEX3. Interacts with VPS1.

It localises to the cytoplasm. It is found in the peroxisome membrane. Its subcellular location is the endoplasmic reticulum membrane. Its function is as follows. Required for proper post-translational import and stabilization of peroxisomal membrane proteins (PMPs). Acts as a cytosolic import receptor for PMPs and delivers them to the docking factor PEX3 at the peroxisomal membrane for subsequent insertion into the membrane. Acts as a chaperone in stabilizing or maintaining PMPs in the lipid bilayer. Directs PEX17, a peripheral component of the peroxisomal matrix protein translocation machinery, to peroxisomes. Stabilizes VPS1, a protein required for peroxisomal fission, at the peroxisomal membrane. Also acts in conjunction with PEX3 in the formation of peroxisomes from preperoxisomal compartments at the endoplasmic reticulum during de novo peroxisome synthesis, probably via the import of additional PMPs. In Saccharomyces cerevisiae (strain YJM789) (Baker's yeast), this protein is Peroxisomal membrane protein import receptor PEX19 (PEX19).